The following is a 124-amino-acid chain: Large ribosomal subunit protein uL18 (124 aa).

It belongs to the universal ribosomal protein uL18 family. Part of the 50S ribosomal subunit; part of the 5S rRNA/L5/L18/L25 subcomplex. Contacts the 5S and 23S rRNAs.

Functionally, this is one of the proteins that bind and probably mediate the attachment of the 5S RNA into the large ribosomal subunit, where it forms part of the central protuberance. The protein is Large ribosomal subunit protein uL18 of Parafrankia sp. (strain EAN1pec).